Here is an 88-residue protein sequence, read N- to C-terminus: Meiosis-expressed gene 1 protein (88 aa).

This sequence belongs to the MEIG1 family. In terms of assembly, interacts with PACRG. Interacts with MORN3. Expressed in the testes (at protein level). Expressed in the ovary. Several isoforms have been identified differing in their 5'-untranslated exons. These isoforms show different tissue expression. Some are expressed in various tissues, including lung, liver, brain, testis, oviduct and oocytes. Some are testis-specific.

Its function is as follows. Essential for spermiogenesis. The polypeptide is Meiosis-expressed gene 1 protein (Mus musculus (Mouse)).